Reading from the N-terminus, the 185-residue chain is NEDD8-conjugating enzyme UBE2F (185 aa).

An N-acetylmethionine modification is found at Met-1. The UBC core domain maps to 32–185; it reads VRDKLLVKEV…VDEYIKRYAR (154 aa). Cys-116 serves as the catalytic Glycyl thioester intermediate.

This sequence belongs to the ubiquitin-conjugating enzyme family. UBE2F subfamily. In terms of assembly, interacts with UBA3 and RBX2. Interacts (N-terminally acetylated form) with (via DCUN1 domain) DCUN1D1, DCUN1D2, DCUN1D3, DCUN1D4 and DCUN1D5. Post-translationally, the acetylation of Met-1 increases affinity for DCUN1D3 by about 2 orders of magnitude and is crucial for NEDD8 transfer to cullins.

The enzyme catalyses [E1 NEDD8-activating enzyme]-S-[NEDD8 protein]-yl-L-cysteine + [E2 NEDD8-conjugating enzyme]-L-cysteine = [E1 NEDD8-activating enzyme]-L-cysteine + [E2 NEDD8-conjugating enzyme]-S-[NEDD8-protein]-yl-L-cysteine.. Its pathway is protein modification; protein neddylation. Its function is as follows. Accepts the ubiquitin-like protein NEDD8 from the UBA3-NAE1 E1 complex and catalyzes its covalent attachment to other proteins. Together with the E3 ubiquitin ligase RNF7/RBX2, specifically neddylates cullin-5 (CUL5). Does not neddylate CUL1, CUL2, CUL3, CUL4A or CUL4B. Mediates neddylation of the CUL9-RBX1 complex. This Rattus norvegicus (Rat) protein is NEDD8-conjugating enzyme UBE2F (Ube2f).